We begin with the raw amino-acid sequence, 267 residues long: Acryloyl-CoA reductase electron transfer subunit gamma (267 aa).

As to quaternary structure, heterohexadecamer; tetramer of tetramers. Each tetramer is composed of 2 alpha (AcrC), a beta (AcrA) and a gamma (AcrB) subunit.

It is found in the cytoplasm. Its function is as follows. Part of the ETF-acryloyl-CoA reductase complex involved in the pathway of L-alanine fermentation. The electron transfer flavoprotein (ETF) serves as a specific electron acceptor for acryloyl-CoA reductase. In Anaerotignum propionicum (Clostridium propionicum), this protein is Acryloyl-CoA reductase electron transfer subunit gamma (acrB).